Here is a 449-residue protein sequence, read N- to C-terminus: Phosphoglucosamine mutase (449 aa).

Ser101 (phosphoserine intermediate) is an active-site residue. Residues Ser101, Asp241, Asp243, and Asp245 each contribute to the Mg(2+) site. Residue Ser101 is modified to Phosphoserine.

Belongs to the phosphohexose mutase family. The cofactor is Mg(2+). Activated by phosphorylation.

It carries out the reaction alpha-D-glucosamine 1-phosphate = D-glucosamine 6-phosphate. Catalyzes the conversion of glucosamine-6-phosphate to glucosamine-1-phosphate. This Acetivibrio thermocellus (strain ATCC 27405 / DSM 1237 / JCM 9322 / NBRC 103400 / NCIMB 10682 / NRRL B-4536 / VPI 7372) (Clostridium thermocellum) protein is Phosphoglucosamine mutase.